A 761-amino-acid polypeptide reads, in one-letter code: Elongation factor G, mitochondrial (761 aa).

The transit peptide at 1 to 42 directs the protein to the mitochondrion; that stretch reads MSVQKMMRVPRKMVGGRIPFFTCSKVFSGFSRRSFHESPLAR. The region spanning 68 to 349 is the tr-type G domain; the sequence is NKLRNIGISA…AIVDYLPNPS (282 aa). Residues 77–84, 148–152, and 202–205 contribute to the GTP site; these read AHIDSGKT, DTPGH, and NKMD.

The protein belongs to the TRAFAC class translation factor GTPase superfamily. Classic translation factor GTPase family. EF-G/EF-2 subfamily. Post-translationally, the precursor is processed in two steps involving mitochondrial intermediate peptidase (MIP) and mitochondrial processing peptidase (MPP).

The protein localises to the mitochondrion. It participates in protein biosynthesis; polypeptide chain elongation. In terms of biological role, mitochondrial GTPase that catalyzes the GTP-dependent ribosomal translocation step during translation elongation. During this step, the ribosome changes from the pre-translocational (PRE) to the post-translocational (POST) state as the newly formed A-site-bound peptidyl-tRNA and P-site-bound deacylated tRNA move to the P and E sites, respectively. Catalyzes the coordinated movement of the two tRNA molecules, the mRNA and conformational changes in the ribosome. The polypeptide is Elongation factor G, mitochondrial (Saccharomyces cerevisiae (strain YJM789) (Baker's yeast)).